The following is a 353-amino-acid chain: Chorismate synthase (353 aa).

NADP(+) contacts are provided by arginine 48 and arginine 54. FMN-binding positions include 125-127 (RSS), 238-239 (NA), glycine 278, 293-297 (KPTSS), and arginine 319.

This sequence belongs to the chorismate synthase family. In terms of assembly, homotetramer. FMNH2 is required as a cofactor.

The enzyme catalyses 5-O-(1-carboxyvinyl)-3-phosphoshikimate = chorismate + phosphate. Its pathway is metabolic intermediate biosynthesis; chorismate biosynthesis; chorismate from D-erythrose 4-phosphate and phosphoenolpyruvate: step 7/7. In terms of biological role, catalyzes the anti-1,4-elimination of the C-3 phosphate and the C-6 proR hydrogen from 5-enolpyruvylshikimate-3-phosphate (EPSP) to yield chorismate, which is the branch point compound that serves as the starting substrate for the three terminal pathways of aromatic amino acid biosynthesis. This reaction introduces a second double bond into the aromatic ring system. The sequence is that of Chorismate synthase from Bordetella pertussis (strain Tohama I / ATCC BAA-589 / NCTC 13251).